Here is a 464-residue protein sequence, read N- to C-terminus: tRNA modification GTPase MnmE (464 aa).

Residues arginine 25, glutamate 87, and lysine 130 each contribute to the (6S)-5-formyl-5,6,7,8-tetrahydrofolate site. Positions 226–386 constitute a TrmE-type G domain; it reads GLSVVLAGQP…LRAELLRIAG (161 aa). Residue asparagine 236 participates in K(+) binding. GTP is bound by residues 236 to 241, 255 to 261, and 280 to 283; these read NVGKSS, TPIAGTT, and DTAG. Mg(2+) is bound at residue serine 240. 3 residues coordinate K(+): threonine 255, isoleucine 257, and threonine 260. Threonine 261 is a binding site for Mg(2+). Residue lysine 464 coordinates (6S)-5-formyl-5,6,7,8-tetrahydrofolate.

It belongs to the TRAFAC class TrmE-Era-EngA-EngB-Septin-like GTPase superfamily. TrmE GTPase family. Homodimer. Heterotetramer of two MnmE and two MnmG subunits. Requires K(+) as cofactor.

The protein localises to the cytoplasm. In terms of biological role, exhibits a very high intrinsic GTPase hydrolysis rate. Involved in the addition of a carboxymethylaminomethyl (cmnm) group at the wobble position (U34) of certain tRNAs, forming tRNA-cmnm(5)s(2)U34. This chain is tRNA modification GTPase MnmE, found in Burkholderia lata (strain ATCC 17760 / DSM 23089 / LMG 22485 / NCIMB 9086 / R18194 / 383).